Consider the following 474-residue polypeptide: Trehalose-6-phosphate synthase (474 aa).

R10 lines the D-glucose 6-phosphate pocket. G22–G23 lines the UDP-alpha-D-glucose pocket. The D-glucose 6-phosphate site is built by Y77 and D131. 2 residues coordinate UDP-alpha-D-glucose: R263 and K268. D-glucose 6-phosphate is bound at residue R301. UDP-alpha-D-glucose-binding positions include F340 and L366 to E370.

It belongs to the glycosyltransferase 20 family. As to quaternary structure, homotetramer.

The enzyme catalyses D-glucose 6-phosphate + UDP-alpha-D-glucose = alpha,alpha-trehalose 6-phosphate + UDP + H(+). It participates in glycan biosynthesis; trehalose biosynthesis. Its function is as follows. Probably involved in the osmoprotection via the biosynthesis of trehalose. Catalyzes the transfer of glucose from UDP-alpha-D-glucose (UDP-Glc) to D-glucose 6-phosphate (Glc-6-P) to form trehalose-6-phosphate. Acts with retention of the anomeric configuration of the UDP-sugar donor. The sequence is that of Trehalose-6-phosphate synthase from Escherichia coli O9:H4 (strain HS).